A 369-amino-acid chain; its full sequence is Anhydro-N-acetylmuramic acid kinase (369 aa).

12–19 is a binding site for ATP; the sequence is GTSLDGVD.

The protein belongs to the anhydro-N-acetylmuramic acid kinase family.

The catalysed reaction is 1,6-anhydro-N-acetyl-beta-muramate + ATP + H2O = N-acetyl-D-muramate 6-phosphate + ADP + H(+). Its pathway is amino-sugar metabolism; 1,6-anhydro-N-acetylmuramate degradation. It participates in cell wall biogenesis; peptidoglycan recycling. In terms of biological role, catalyzes the specific phosphorylation of 1,6-anhydro-N-acetylmuramic acid (anhMurNAc) with the simultaneous cleavage of the 1,6-anhydro ring, generating MurNAc-6-P. Is required for the utilization of anhMurNAc either imported from the medium or derived from its own cell wall murein, and thus plays a role in cell wall recycling. This is Anhydro-N-acetylmuramic acid kinase from Shigella boydii serotype 4 (strain Sb227).